The primary structure comprises 429 residues: Argininosuccinate lyase (429 aa).

This sequence belongs to the lyase 1 family. Argininosuccinate lyase subfamily.

Its subcellular location is the cytoplasm. The enzyme catalyses 2-(N(omega)-L-arginino)succinate = fumarate + L-arginine. It participates in amino-acid biosynthesis; L-arginine biosynthesis; L-arginine from L-ornithine and carbamoyl phosphate: step 3/3. The chain is Argininosuccinate lyase from Pyrobaculum neutrophilum (strain DSM 2338 / JCM 9278 / NBRC 100436 / V24Sta) (Thermoproteus neutrophilus).